We begin with the raw amino-acid sequence, 174 residues long: Ubiquitin-like protein 4B (174 aa).

One can recognise a Ubiquitin-like domain in the interval 1–76 (MFLTVKLLLG…INVIMQPLEK (76 aa)). A compositionally biased stretch (basic and acidic residues) spans 141 to 156 (EPHVEPAGERELEAKA). Residues 141–174 (EPHVEPAGERELEAKARPQSSCDMEEKEEAAADQ) are disordered. Residues 163-174 (DMEEKEEAAADQ) show a composition bias toward acidic residues.

The protein localises to the cytoplasm. In Homo sapiens (Human), this protein is Ubiquitin-like protein 4B (UBL4B).